Here is a 144-residue protein sequence, read N- to C-terminus: Cathelicidin-4 (144 aa).

An N-terminal signal peptide occupies residues 1 to 29 (MQTQRASLSLGRWSLWLLLLGLVVPSASA). Residues 30–130 (QALSYREAVL…DLNCNELQSV (101 aa)) constitute a propeptide that is removed on maturation. 2 disulfide bridges follow: Cys85–Cys96 and Cys107–Cys124. Arg143 carries the post-translational modification Arginine amide.

The protein belongs to the cathelicidin family. Elastase might be responsible for its maturation. As to expression, large granules of neutrophils.

Its subcellular location is the secreted. Its function is as follows. Potent microbicidal activity; active against S.aureus and E.coli. This chain is Cathelicidin-4 (CATHL4), found in Bos taurus (Bovine).